Consider the following 353-residue polypeptide: S-adenosylmethionine:tRNA ribosyltransferase-isomerase (353 aa).

Belongs to the QueA family. Monomer.

It localises to the cytoplasm. It catalyses the reaction 7-aminomethyl-7-carbaguanosine(34) in tRNA + S-adenosyl-L-methionine = epoxyqueuosine(34) in tRNA + adenine + L-methionine + 2 H(+). The protein operates within tRNA modification; tRNA-queuosine biosynthesis. In terms of biological role, transfers and isomerizes the ribose moiety from AdoMet to the 7-aminomethyl group of 7-deazaguanine (preQ1-tRNA) to give epoxyqueuosine (oQ-tRNA). The protein is S-adenosylmethionine:tRNA ribosyltransferase-isomerase of Paraburkholderia phymatum (strain DSM 17167 / CIP 108236 / LMG 21445 / STM815) (Burkholderia phymatum).